A 409-amino-acid polypeptide reads, in one-letter code: MTSPIHVNSEIGKLKTVLLKRPGKEVENITPDIMYRLLFDDIPYLPTIQKEHDQFAQTLRDNGVEVLYLENLAAEAIDAGDVKEAFLDKMLNESHIKSPQVQAALKDYLISMATLDMVEKIMAGVRTNEIDIKSKALIDVSADDDYPFYMDPMPNLYFTRDPAASMGDGLTINKMTFEARQRESMFMEVIMQHHPRFANQGAQVWRDRDHIDRMEGGDELILSDKVLAIGISQRTSAQSIEELAKVLFANHSGFEKILAIKIPHKHAMMHLDTVFTMIDYDKFTIHPGIQGAGGMVDTYILEPGNNDEIKITHQTDLEKVLRDALEVPELTLIPCGGGDAVVAPREQWNDGSNTLAIAPGVVVTYDRNYVSNENLRQYGIKVIEVPSSELSRGRGGPRCMSMPLVRRKT.

The Amidino-cysteine intermediate role is filled by cysteine 399.

Belongs to the arginine deiminase family.

It localises to the cytoplasm. The catalysed reaction is L-arginine + H2O = L-citrulline + NH4(+). It participates in amino-acid degradation; L-arginine degradation via ADI pathway; carbamoyl phosphate from L-arginine: step 1/2. This Latilactobacillus sakei (Lactobacillus sakei) protein is Arginine deiminase (arcA).